Consider the following 314-residue polypeptide: Serine acetyltransferase 1, chloroplastic (314 aa).

The protein belongs to the transferase hexapeptide repeat family. In terms of assembly, homomultimer. Interacts with OASA1 and CYP20-3. Component of the cysteine synthase complex (CSC) composed of two OAS-TL dimers and one SAT hexamer. In terms of tissue distribution, mostly expressed in leaves. Localized in cortex, trichomes and vascular tissues, particularly in phloem.

It localises to the plastid. The protein localises to the chloroplast. Its subcellular location is the cytoplasm. The enzyme catalyses L-serine + acetyl-CoA = O-acetyl-L-serine + CoA. Its pathway is amino-acid biosynthesis; L-cysteine biosynthesis; L-cysteine from L-serine: step 1/2. Functionally, serine acetyltransferase which catalyzes the formation of O-acetyl-L-serine from acetyl-CoA and L-serine. Also displays O-acetylserine (thio1)-lyase activity in vitro. May be involved in detoxification process by mediating the production of glutathione. This chain is Serine acetyltransferase 1, chloroplastic (SAT1), found in Arabidopsis thaliana (Mouse-ear cress).